The primary structure comprises 566 residues: Cytokine-like nuclear factor N-PAC (566 aa).

A PWWP domain is found at 9 to 70; sequence VNDLVWAKMK…ETQIKPYLQF (62 aa). Disordered regions lie at residues 127–147 and 206–234; these read VASG…NTTT and MLDD…SSLD. The interval 274 to 566 is dehydrogenase domain; the sequence is RNIKASQLKF…ASAVYVRARF (293 aa). NAD(+) contacts are provided by residues 284-298 and lysine 518; that span reads GFLG…IVKN.

It belongs to the HIBADH-related family. NP60 subfamily. Binds to mononucleosomes. Interacts with male-specific lethal (MSL) histone acetyltransferase complex at least composed of mof, msl-1, msl-2 and msl-3.

It is found in the chromosome. May have oxidoreductase activity. The polypeptide is Cytokine-like nuclear factor N-PAC (Anopheles gambiae (African malaria mosquito)).